The chain runs to 257 residues: Hydroxyethylthiazole kinase (257 aa).

M49 contacts substrate. R124 and T170 together coordinate ATP. Residue G197 coordinates substrate.

The protein belongs to the Thz kinase family. Requires Mg(2+) as cofactor.

It carries out the reaction 5-(2-hydroxyethyl)-4-methylthiazole + ATP = 4-methyl-5-(2-phosphooxyethyl)-thiazole + ADP + H(+). It functions in the pathway cofactor biosynthesis; thiamine diphosphate biosynthesis; 4-methyl-5-(2-phosphoethyl)-thiazole from 5-(2-hydroxyethyl)-4-methylthiazole: step 1/1. Its function is as follows. Catalyzes the phosphorylation of the hydroxyl group of 4-methyl-5-beta-hydroxyethylthiazole (THZ). The protein is Hydroxyethylthiazole kinase of Klebsiella pneumoniae subsp. pneumoniae (strain ATCC 700721 / MGH 78578).